A 272-amino-acid chain; its full sequence is MTLQEQIMKALHVQPVIDPKVEIRKRVDFLKDYVKKTGAKGFVLGISGGQDSTLAGRLAQLAVEEIRNEGGNVTFIAVRLPYKVQKDEDDAQLALQFIQADQSVAFDIASTVDAFSNQYENLLGESLTDFNKGNVKARIRMVTQYAIGGQKGLLVIGTDHAAEAVTGFFTKFGDGGADLLPLTGLTKRQGRALLQELGADERLYLKMPTADLLDEKPGQADETELGITYDQLDDYLEGKAVPADVAEKIEKRYTVSEHKRQVPASMFDDWWK.

45 to 52 is a binding site for ATP; the sequence is GISGGQDS. Asp51 serves as a coordination point for Mg(2+). Residue Arg138 participates in deamido-NAD(+) binding. Thr158 is an ATP binding site. A Mg(2+)-binding site is contributed by Glu163. Deamido-NAD(+) contacts are provided by Lys171 and Asp178. Residues Lys187 and Thr209 each contribute to the ATP site. Deamido-NAD(+) is bound at residue 258–259; it reads HK.

This sequence belongs to the NAD synthetase family. As to quaternary structure, homodimer.

It carries out the reaction deamido-NAD(+) + NH4(+) + ATP = AMP + diphosphate + NAD(+) + H(+). The protein operates within cofactor biosynthesis; NAD(+) biosynthesis; NAD(+) from deamido-NAD(+) (ammonia route): step 1/1. In terms of biological role, catalyzes the ATP-dependent amidation of deamido-NAD to form NAD. Uses ammonia as a nitrogen source. The sequence is that of NH(3)-dependent NAD(+) synthetase from Bacillus cereus (strain ATCC 14579 / DSM 31 / CCUG 7414 / JCM 2152 / NBRC 15305 / NCIMB 9373 / NCTC 2599 / NRRL B-3711).